The following is a 425-amino-acid chain: Polyribonucleotide 5'-hydroxyl-kinase Clp1 (425 aa).

ATP-binding positions include glutamate 22, lysine 62, and 124 to 129 (DVGKST).

The protein belongs to the Clp1 family. Clp1 subfamily. As to quaternary structure, component of the tRNA splicing endonuclease complex. Component of pre-mRNA cleavage complex II (CF-II).

The protein localises to the nucleus. It catalyses the reaction a 5'-end dephospho-2'-deoxyribonucleoside-DNA + ATP = a 5'-end 5'-phospho-2'-deoxyribonucleoside-DNA + ADP + H(+). The enzyme catalyses a 5'-end dephospho-ribonucleoside-RNA + ATP = a 5'-end 5'-phospho-ribonucleoside-RNA + ADP + H(+). Polynucleotide kinase that can phosphorylate the 5'-hydroxyl groups of double-stranded RNA (dsRNA), single-stranded RNA (ssRNA), double stranded DNA (dsDNA) and double-stranded DNA:RNA hybrids. dsRNA is phosphorylated more efficiently than dsDNA, and the RNA component of a DNA:RNA hybrid is phosphorylated more efficiently than the DNA component. Plays a role in both tRNA splicing and mRNA 3'-end formation. Component of the tRNA splicing endonuclease complex: phosphorylates the 5'-terminus of the tRNA 3'-exon during tRNA splicing; this phosphorylation event is a prerequisite for the subsequent ligation of the two exon halves and the production of a mature tRNA. Its role in tRNA splicing and maturation is required for cerebellar development. Component of the pre-mRNA cleavage complex II (CF-II), which seems to be required for mRNA 3'-end formation. Also phosphorylates the 5'-terminus of exogenously introduced short interfering RNAs (siRNAs), which is a necessary prerequisite for their incorporation into the RNA-induced silencing complex (RISC). However, endogenous siRNAs and microRNAs (miRNAs) that are produced by the cleavage of dsRNA precursors by dicer1 already contain a 5'-phosphate group, so this protein may be dispensible for normal RNA-mediated gene silencing. The chain is Polyribonucleotide 5'-hydroxyl-kinase Clp1 from Gallus gallus (Chicken).